A 90-amino-acid polypeptide reads, in one-letter code: DNA-binding protein HU (90 aa).

A disordered region spans residues 57–90 (ARKGVNPQTRKPITIPERKVPKFKPGKALKEKVK).

The protein belongs to the bacterial histone-like protein family.

Its function is as follows. Histone-like DNA-binding protein which is capable of wrapping DNA to stabilize it, and thus to prevent its denaturation under extreme environmental conditions. This is DNA-binding protein HU (hup) from Thermotoga maritima (strain ATCC 43589 / DSM 3109 / JCM 10099 / NBRC 100826 / MSB8).